The sequence spans 467 residues: Asparagine--tRNA ligase (467 aa).

This sequence belongs to the class-II aminoacyl-tRNA synthetase family. In terms of assembly, homodimer.

It localises to the cytoplasm. The enzyme catalyses tRNA(Asn) + L-asparagine + ATP = L-asparaginyl-tRNA(Asn) + AMP + diphosphate + H(+). The protein is Asparagine--tRNA ligase of Legionella pneumophila (strain Lens).